A 492-amino-acid chain; its full sequence is Polyamine oxidase 5 (492 aa).

4 residues coordinate FAD: Glu-55, Arg-63, Val-244, and Glu-431. The Microbody targeting signal motif lies at 490 to 492 (SRL).

The protein belongs to the flavin monoamine oxidase family. The cofactor is FAD. Widely expressed.

The protein resides in the peroxisome. It catalyses the reaction spermine + O2 + H2O = 3-aminopropanal + spermidine + H2O2. The catalysed reaction is norspermine + O2 + H2O = norspermidine + 3-aminopropanal + H2O2. It carries out the reaction thermospermine + O2 + H2O = 3-aminopropanal + spermidine + H2O2. Its pathway is amine and polyamine degradation; spermine degradation. Functionally, flavoenzyme involved in polyamine back-conversion. Catalyzes the oxidation of the secondary amino group of polyamines, such as spermine. Substrate preference is spermine &gt; thermospermine &gt; norspermine. No activity detected when putrescine, spermidine or N(1)-acetylspermidine are used as substrates. Plays an important role in the regulation of polyamine intracellular concentration. May play a role in producing hydrogen peroxide during seed germination. This chain is Polyamine oxidase 5, found in Oryza sativa subsp. japonica (Rice).